A 129-amino-acid polypeptide reads, in one-letter code: Large ribosomal subunit protein bL19 (129 aa).

Belongs to the bacterial ribosomal protein bL19 family.

In terms of biological role, this protein is located at the 30S-50S ribosomal subunit interface and may play a role in the structure and function of the aminoacyl-tRNA binding site. This chain is Large ribosomal subunit protein bL19, found in Burkholderia mallei (strain NCTC 10247).